The primary structure comprises 234 residues: Glucosamine-6-phosphate deaminase (234 aa).

Residue D62 is the Proton acceptor; for enolization step of the active site. Residue N128 is the For ring-opening step of the active site. H130 (proton acceptor; for ring-opening step) is an active-site residue. E135 acts as the For ring-opening step in catalysis.

Belongs to the glucosamine/galactosamine-6-phosphate isomerase family. NagB subfamily.

The catalysed reaction is alpha-D-glucosamine 6-phosphate + H2O = beta-D-fructose 6-phosphate + NH4(+). Its pathway is amino-sugar metabolism; N-acetylneuraminate degradation; D-fructose 6-phosphate from N-acetylneuraminate: step 5/5. In terms of biological role, catalyzes the reversible isomerization-deamination of glucosamine 6-phosphate (GlcN6P) to form fructose 6-phosphate (Fru6P) and ammonium ion. The protein is Glucosamine-6-phosphate deaminase of Streptococcus pyogenes serotype M3 (strain ATCC BAA-595 / MGAS315).